The chain runs to 256 residues: Probable histidine-binding protein (256 aa).

Positions 1 to 19 are cleaved as a signal peptide; the sequence is MKKFLTAFLVAFTGLFLVA. The N-palmitoyl cysteine moiety is linked to residue Cys-20. Residue Cys-20 is the site of S-diacylglycerol cysteine attachment.

Belongs to the bacterial solute-binding protein 3 family.

It is found in the cell membrane. Its function is as follows. Involved in histidine transport. This Campylobacter jejuni subsp. jejuni serotype O:2 (strain ATCC 700819 / NCTC 11168) protein is Probable histidine-binding protein (hisJ).